A 488-amino-acid chain; its full sequence is Wax ester synthase/diacylglycerol acyltransferase 8 (488 aa).

The Cytoplasmic segment spans residues 1 to 195; the sequence is MKNEEEEPLS…AIFTIGSTMR (195 aa). H135 serves as the catalytic Proton acceptor. Residues 196–214 traverse the membrane as a helical segment; that stretch reads LIWNTLVDMFLLFATMLFL. Over 215-488 the chain is Lumenal; sequence KDTKTPLKGG…RGLLKEAYKV (274 aa). 4 N-linked (GlcNAc...) asparagine glycosylation sites follow: N238, N252, N353, and N397.

This sequence in the N-terminal section; belongs to the long-chain O-acyltransferase family. As to expression, mostly expressed in flowers and siliques and at low levels in stems.

It is found in the cell membrane. Its subcellular location is the endoplasmic reticulum membrane. It catalyses the reaction an acyl-CoA + a 1,2-diacyl-sn-glycerol = a triacyl-sn-glycerol + CoA. It carries out the reaction a long chain fatty alcohol + a fatty acyl-CoA = a wax ester + CoA. The protein operates within glycerolipid metabolism; triacylglycerol biosynthesis. It functions in the pathway lipid metabolism. Its function is as follows. Bifunctional wax ester synthase/diacylglycerol acyltransferase. Involved in cuticular wax biosynthesis. This chain is Wax ester synthase/diacylglycerol acyltransferase 8, found in Arabidopsis thaliana (Mouse-ear cress).